Reading from the N-terminus, the 1151-residue chain is ATP-dependent helicase/deoxyribonuclease subunit B (1151 aa).

The region spanning 1–273 is the UvrD-like helicase ATP-binding domain; it reads MALRLVLGRA…LALAAGVRVE (273 aa). 8–15 serves as a coordination point for ATP; that stretch reads GRAGSGKT. The UvrD-like helicase C-terminal domain occupies 282 to 578; sequence PPRFREAPAL…KLRLIPPALD (297 aa). The [4Fe-4S] cluster site is built by Cys788, Cys1107, Cys1110, and Cys1116.

The protein belongs to the helicase family. AddB/RexB type 1 subfamily. Heterodimer of AddA and AddB. Requires Mg(2+) as cofactor. [4Fe-4S] cluster is required as a cofactor.

In terms of biological role, the heterodimer acts as both an ATP-dependent DNA helicase and an ATP-dependent, dual-direction single-stranded exonuclease. Recognizes the chi site generating a DNA molecule suitable for the initiation of homologous recombination. The AddB subunit has 5' -&gt; 3' nuclease activity but not helicase activity. The chain is ATP-dependent helicase/deoxyribonuclease subunit B from Moorella thermoacetica (strain ATCC 39073 / JCM 9320).